A 251-amino-acid chain; its full sequence is Sec-independent protein translocase protein TatC (251 aa).

The next 6 membrane-spanning stretches (helical) occupy residues A23 to L43, S73 to I93, I104 to F124, L159 to V179, I197 to Q217, and F218 to I238.

The protein belongs to the TatC family. The Tat system comprises two distinct complexes: a TatABC complex, containing multiple copies of TatA, TatB and TatC subunits, and a separate TatA complex, containing only TatA subunits. Substrates initially bind to the TatABC complex, which probably triggers association of the separate TatA complex to form the active translocon.

The protein localises to the cell inner membrane. Functionally, part of the twin-arginine translocation (Tat) system that transports large folded proteins containing a characteristic twin-arginine motif in their signal peptide across membranes. Together with TatB, TatC is part of a receptor directly interacting with Tat signal peptides. This chain is Sec-independent protein translocase protein TatC, found in Rickettsia prowazekii (strain Madrid E).